Consider the following 62-residue polypeptide: Alpha-conotoxin-like S1.1 (62 aa).

Positions 1–21 (MGMRMMFTVFLLVVLAITVVS) are cleaved as a signal peptide. Residues 22–48 (FPLDRESDGANAEARTHDHEKHALDRN) constitute a propeptide that is removed on maturation. Intrachain disulfides connect cysteine 50/cysteine 56 and cysteine 51/cysteine 61. The residue at position 61 (cysteine 61) is a Cysteine amide.

Belongs to the conotoxin A superfamily. Expressed by the venom duct.

It is found in the secreted. In terms of biological role, alpha-conotoxins act on postsynaptic membranes, they bind to the nicotinic acetylcholine receptors (nAChR) and thus inhibit them. The chain is Alpha-conotoxin-like S1.1 from Conus striatus (Striated cone).